Reading from the N-terminus, the 90-residue chain is WAP four-disulfide core domain protein 12 (90 aa).

A signal peptide spans 1–23 (MGSSSFLVLMVSLALVTLVAVEG). The region spanning 27–74 (GIEKAGVCPADNVRCFKSDPPQCHTDQDCLGERKCCYLHCGFKCVIPV) is the WAP domain. Cystine bridges form between Cys-34–Cys-62, Cys-41–Cys-66, Cys-49–Cys-61, and Cys-55–Cys-70.

It is found in the secreted. Its function is as follows. Antibacterial protein. Putative acid-stable proteinase inhibitor. The polypeptide is WAP four-disulfide core domain protein 12 (WFDC12) (Pongo abelii (Sumatran orangutan)).